A 33-amino-acid polypeptide reads, in one-letter code: Mu/omega-theraphotoxin-Tap2a (33 aa).

3 cysteine pairs are disulfide-bonded: C2–C17, C9–C22, and C16–C29.

Belongs to the neurotoxin 10 (Hwtx-1) family. 59 (Tltx) subfamily. Expressed by the venom gland.

The protein localises to the secreted. Gating-modifier toxin that inhibits both sodium (Nav) and calcium (Cav3) channels by inducing hyperpolarizing shift in voltage-dependence of activation and steady state inactivation. Inhibits Nav1.1/SCN1A, Nav1.2/SCN2A, Nav1.6/SCN6A, Nav1.7/SCN9A and Cav3.1/CACNA1G sodium and calcium channels at nanomolar concentrations (IC(50)=169-621 nM). Surprisingly, selectively slows fast inactivation of Nav1.3/SCN3A. Also shows moderate inhibition of Nav1.3/SCN3A sodium channels (IC(50)=1216 nM). This chain is Mu/omega-theraphotoxin-Tap2a, found in Theraphosa apophysis (Goliath pinkfoot tarantula).